A 155-amino-acid chain; its full sequence is UPF0178 protein TDE_2151 (155 aa).

This sequence belongs to the UPF0178 family.

The chain is UPF0178 protein TDE_2151 from Treponema denticola (strain ATCC 35405 / DSM 14222 / CIP 103919 / JCM 8153 / KCTC 15104).